A 272-amino-acid polypeptide reads, in one-letter code: Phosphate import ATP-binding protein PstB (272 aa).

One can recognise an ABC transporter domain in the interval 26 to 267; the sequence is LEIRNLDLSY…PRKRKTEDYI (242 aa). 58–65 contacts ATP; it reads GPSGCGKS.

It belongs to the ABC transporter superfamily. Phosphate importer (TC 3.A.1.7) family. As to quaternary structure, the complex is composed of two ATP-binding proteins (PstB), two transmembrane proteins (PstC and PstA) and a solute-binding protein (PstS).

It is found in the cell inner membrane. It carries out the reaction phosphate(out) + ATP + H2O = ADP + 2 phosphate(in) + H(+). Part of the ABC transporter complex PstSACB involved in phosphate import. Responsible for energy coupling to the transport system. This Shewanella denitrificans (strain OS217 / ATCC BAA-1090 / DSM 15013) protein is Phosphate import ATP-binding protein PstB.